Reading from the N-terminus, the 624-residue chain is Ceramide transfer protein (624 aa).

Residues 1-11 (MSDNQSWNSSG) show a composition bias toward polar residues. Residues 1–24 (MSDNQSWNSSGSEEDPETESGPPV) are disordered. Positions 23–117 (PVERCGVLSK…WVDAIEQHKT (95 aa)) constitute a PH domain. Ser-126, Ser-132, and Ser-135 each carry phosphoserine. Residues 202–221 (DDEDDFPTTRSDGDFLHNTN) are disordered. Residues 263-303 (IELMVKREESWQKRHDREVEKRRRVEEAYKNVMEELKKKPR) adopt a coiled-coil conformation. Phosphoserine is present on Ser-315. An FFAT motif is present at residues 321-327 (EFFDAVE). Position 372 is a phosphotyrosine (Tyr-372). 3 positions are modified to phosphoserine: Ser-373, Ser-377, and Ser-380. In terms of domain architecture, START spans 389–618 (DVHRFSSQVE…FTSYVQEKTA (230 aa)). An N-acylsphing-4-enine is bound by residues Glu-472, Gln-493, Asn-530, and Tyr-579.

As to quaternary structure, interacts with VAPA and VAPB. Interaction with VAPB is less efficient than with VAPA. Interacts (via FFAT motif) with MOSPD2 (via MSP domain). Phosphorylation on Ser-132 decreases the affinity toward phosphatidylinositol 4-phosphate at Golgi membranes and reduces ceramide transfer activity. Inactivated by hyperphosphorylation of serine residues by CSNK1G2/CK1 that triggers dissociation from the Golgi complex, thus down-regulating ER-to-Golgi transport of ceramide and sphingomyelin synthesis.

It localises to the cytoplasm. The protein resides in the golgi apparatus. The protein localises to the endoplasmic reticulum. The enzyme catalyses N-hexadecanoylsphing-4-enine(in) = N-hexadecanoylsphing-4-enine(out). Shelters ceramides and diacylglycerol lipids inside its START domain and mediates the intracellular trafficking of ceramides and diacylglycerol lipids in a non-vesicular manner. This Mus musculus (Mouse) protein is Ceramide transfer protein (Cert1).